Here is a 372-residue protein sequence, read N- to C-terminus: Segmentation polarity homeobox protein engrailed (372 aa).

Disordered regions lie at residues 1-35 (MAFE…YSPQ), 47-112 (YERG…LQPT), 196-246 (ERLS…QSNP), and 261-286 (DRPS…PRTA). Basic and acidic residues-rich tracts occupy residues 79-105 (DYYR…DRSR) and 197-215 (RLSR…KRPD). A compositionally biased stretch (low complexity) spans 216 to 244 (SASSIVSSTSSGAVSTCGSSDASSIQSQS). The homeobox DNA-binding region spans 280-339 (EKRPRTAFSGAQLARLKHEFAENRYLTERRRQSLAAELGLAEAQIKIWFQNKRAKIKKAS).

Belongs to the engrailed homeobox family. Expressed in the middle silk gland but not in the posterior silk gland during the fourth molt/fifth intermolt period.

Its subcellular location is the nucleus. Functionally, this protein might be involved in the compartmentalization of the silk gland. This Bombyx mori (Silk moth) protein is Segmentation polarity homeobox protein engrailed (en).